Here is a 317-residue protein sequence, read N- to C-terminus: MTTFIQNPTQQLQLRKLTGRIGAEISGIHLSSELDSSTVQFIHDALLEHKVLFFRGQQHLGDTEQEKFAELFGSPVKHPTVPAADGTDFIFELDSQKGARANSWHTDVTFVDAYPKISILRGLIIPETGGDTTWANTETAYEDLPELLKQFAEQLVAVHSNEYDYGGPKQNVEPEQLERLKKVFVSTKYETEHPVVIVHPETGKKSLLLGHFFKRLVGFSQSDSQLLFNILQEKVTRPENTVRWQWQEGDVVIWDNRSTQHYAVNDYGDQHRVVRRITLAGEVTTGAHGLKGKTTLPKDLSAEQLEKAKLHAVLNAN.

H78 contacts substrate. Fe cation-binding residues include H105 and D107. Substrate is bound at residue V108. T132 is a 2-oxoglutarate binding site. H261 contacts Fe cation. 2-oxoglutarate is bound by residues R272 and R276.

This sequence belongs to the TfdA dioxygenase family. Homotetramer. The cofactor is Fe(2+).

In terms of biological role, alpha-ketoglutarate-dependent dioxygenase that in vitro catalyzes the oxygenolytic release of sulfite from hexylsulfate. This chain is Alkylsulfatase, found in Acinetobacter baylyi (strain ATCC 33305 / BD413 / ADP1).